A 221-amino-acid chain; its full sequence is Histone H1.3 (221 aa).

Positions 1–17 (MSETAPVAPAAPAPAEK) are enriched in low complexity. The tract at residues 1-42 (MSETAPVAPAAPAPAEKTPVKKKAKKSGVAAGKRKASGPPVS) is disordered. Residue Ser2 is modified to N-acetylserine. At Ser2 the chain carries Phosphoserine. Lys17 is subject to N6-acetyllysine. Thr18 carries the post-translational modification Phosphothreonine. The segment covering 20–36 (VKKKAKKSGVAAGKRKA) has biased composition (basic residues). An N6-(beta-hydroxybutyryl)lysine mark is found at Lys35 and Lys53. Residues 37–110 (SGPPVSELIT…GASGSFKLNK (74 aa)) enclose the H15 domain. Citrulline is present on Arg55. N6-(beta-hydroxybutyryl)lysine is present on residues Lys65, Lys86, and Lys91. The disordered stretch occupies residues 87-221 (SLVSKGTLVQ…KAKKAVSKKK (135 aa)). Ser105 is modified (phosphoserine; by PKC). Lys107 bears the N6-(beta-hydroxybutyryl)lysine mark. Basic residues-rich tracts occupy residues 120–141 (KGKK…KPKK), 150–161 (KAAKKTPKKVKK), 170–187 (KVAK…KKPT), and 194–221 (KAPK…SKKK).

This sequence belongs to the histone H1/H5 family. In terms of processing, H1 histones are progressively phosphorylated during the cell cycle, becoming maximally phosphorylated during late G2 phase and M phase, and being dephosphorylated sharply thereafter. Post-translationally, citrullination at Arg-55 (H1R54ci) by PADI4 takes place within the DNA-binding site of H1 and results in its displacement from chromatin and global chromatin decondensation, thereby promoting pluripotency and stem cell maintenance.

The protein localises to the nucleus. It is found in the chromosome. Functionally, H1 histones bind to linker DNA between nucleosomes forming the macromolecular structure known as the chromatin fiber. H1 histones are necessary for the condensation of nucleosome chains into higher-order structured fibers. Also acts as a regulator of individual gene transcription through chromatin remodeling, nucleosome spacing and DNA methylation. The chain is Histone H1.3 from Bos taurus (Bovine).